The following is a 547-amino-acid chain: Cytochrome P450 78A1 (547 aa).

Positions 84-94 are enriched in low complexity; the sequence is ASSRCPGAAAP. The interval 84–104 is disordered; it reads ASSRCPGAAAPRPRRDGPRRR. Heme is bound at residue C490.

This sequence belongs to the cytochrome P450 family. Heme serves as cofactor. In terms of tissue distribution, shoot apex.

This chain is Cytochrome P450 78A1 (CYP78A1), found in Zea mays (Maize).